A 280-amino-acid chain; its full sequence is Protoheme IX farnesyltransferase (280 aa).

Helical transmembrane passes span 2 to 21 (VVAT…RAGL), 30 to 50 (AAVP…VVSG), 83 to 103 (LALW…LVGV), 105 to 125 (ATTG…YTPL), 131 to 151 (LSLP…WTSV), 160 to 180 (FLLF…ISLF), 206 to 226 (IVGY…LGVA), 229 to 249 (VYLG…VYGL), and 260 to 280 (QVFF…MIGA).

Belongs to the UbiA prenyltransferase family. Protoheme IX farnesyltransferase subfamily.

The protein localises to the cell inner membrane. It carries out the reaction heme b + (2E,6E)-farnesyl diphosphate + H2O = Fe(II)-heme o + diphosphate. It functions in the pathway porphyrin-containing compound metabolism; heme O biosynthesis; heme O from protoheme: step 1/1. In terms of biological role, converts heme B (protoheme IX) to heme O by substitution of the vinyl group on carbon 2 of heme B porphyrin ring with a hydroxyethyl farnesyl side group. The chain is Protoheme IX farnesyltransferase from Sorangium cellulosum (strain So ce56) (Polyangium cellulosum (strain So ce56)).